The chain runs to 385 residues: D-alanine--D-alanine ligase (385 aa).

The ATP-grasp domain occupies 165 to 375 (KRVFTSFGLK…YPELVDRLVE (211 aa)). ATP is bound at residue 201–256 (AGEHGWPLFVKPARAGSSIGITKVDDLAGLDEAVAEAQRHDPKIIVEALLRGREIE). Residues Asp329, Glu342, and Asn344 each contribute to the Mg(2+) site.

Belongs to the D-alanine--D-alanine ligase family. The cofactor is Mg(2+). Requires Mn(2+) as cofactor.

The protein localises to the cytoplasm. It catalyses the reaction 2 D-alanine + ATP = D-alanyl-D-alanine + ADP + phosphate + H(+). Its pathway is cell wall biogenesis; peptidoglycan biosynthesis. Cell wall formation. This chain is D-alanine--D-alanine ligase, found in Streptomyces avermitilis (strain ATCC 31267 / DSM 46492 / JCM 5070 / NBRC 14893 / NCIMB 12804 / NRRL 8165 / MA-4680).